A 106-amino-acid polypeptide reads, in one-letter code: Large ribosomal subunit protein uL24 (106 aa).

This sequence belongs to the universal ribosomal protein uL24 family. As to quaternary structure, part of the 50S ribosomal subunit.

Its function is as follows. One of two assembly initiator proteins, it binds directly to the 5'-end of the 23S rRNA, where it nucleates assembly of the 50S subunit. Functionally, one of the proteins that surrounds the polypeptide exit tunnel on the outside of the subunit. The chain is Large ribosomal subunit protein uL24 from Blochmanniella floridana.